A 328-amino-acid polypeptide reads, in one-letter code: Aspartate carbamoyltransferase catalytic subunit (328 aa).

Positions 55 and 56 each coordinate carbamoyl phosphate. An L-aspartate-binding site is contributed by lysine 83. Carbamoyl phosphate contacts are provided by arginine 105, histidine 135, and glutamine 138. The L-aspartate site is built by arginine 176 and arginine 230. Residues glycine 271 and proline 272 each coordinate carbamoyl phosphate.

The protein belongs to the aspartate/ornithine carbamoyltransferase superfamily. ATCase family. As to quaternary structure, heterododecamer (2C3:3R2) of six catalytic PyrB chains organized as two trimers (C3), and six regulatory PyrI chains organized as three dimers (R2).

The catalysed reaction is carbamoyl phosphate + L-aspartate = N-carbamoyl-L-aspartate + phosphate + H(+). It functions in the pathway pyrimidine metabolism; UMP biosynthesis via de novo pathway; (S)-dihydroorotate from bicarbonate: step 2/3. In terms of biological role, catalyzes the condensation of carbamoyl phosphate and aspartate to form carbamoyl aspartate and inorganic phosphate, the committed step in the de novo pyrimidine nucleotide biosynthesis pathway. This chain is Aspartate carbamoyltransferase catalytic subunit, found in Streptomyces griseus subsp. griseus (strain JCM 4626 / CBS 651.72 / NBRC 13350 / KCC S-0626 / ISP 5235).